We begin with the raw amino-acid sequence, 404 residues long: MSENQRLGLSEEEVEAAEVLGVLKQSCRQKSQPSEDVSQADKMPASESSTTPLNILDRVSNKIISNVVTFYDEINTNKRPLKSIGRLLDDDDDEHDDYDYNDDEFFTNKRQKLSRAIAKGKDNLKEYKLNMSIESKKRLVTCLHLLKLANKQLSDKISCLQDLVEKEQVHPLHKQDGNARTTTGAGEDETSSDEDDDDEEFFDASEQVNASEQSIVVKMEVVGTVKKVYSLISKFTANSLPEPARSQVRESLLNLPTNWFDSVHSTSLPHHASFHYANCEEQKVEQQQQQQQQQQQQQLLQQQLLQQQQQKRNKDGDDSASPSSSVTANGKVLILAKESLEMVRNVMGVVDSTLGKAEEWVKQKQEVKEMIRERFLQQQQQYRQQQQKDGNYVKPSQDNVDSKD.

Position 10 is a phosphoserine (Ser10). Residues 25-51 are disordered; it reads QSCRQKSQPSEDVSQADKMPASESSTT. Over residues 26 to 37 the composition is skewed to polar residues; sequence SCRQKSQPSEDV. Residues 109–138 form a basic motif region; it reads KRQKLSRAIAKGKDNLKEYKLNMSIESKKR. A leucine-zipper region spans residues 139–160; sequence LVTCLHLLKLANKQLSDKISCL. Disordered regions lie at residues 170-201, 305-327, and 378-404; these read HPLH…DEEF, LQQQ…SSVT, and QQQQ…DSKD. Positions 186–201 are enriched in acidic residues; that stretch reads GEDETSSDEDDDDEEF. The short motif at 200 to 206 is the FFAT element; that stretch reads EFFDASE. The segment covering 378 to 387 has biased composition (low complexity); it reads QQQQYRQQQQ. The segment covering 394 to 404 has biased composition (polar residues); the sequence is KPSQDNVDSKD.

As to quaternary structure, interacts with SCS2.

The protein localises to the endoplasmic reticulum. It is found in the nucleus. Negative regulator of the transcriptional complex INO2-INO4 in response to phospholipid precursor availability. When precursors become limiting, OPI1 is retained at the endoplasmic reticulum (ER) and INO2-INO4 activates INO1 and other genes required for phospholipid biosynthesis, whereas abundant precursor availability results in targeting of OPI1 to the nucleus to repress transcription of these genes. Binds directly to phosphatidic acid, which is required for ER targeting and may act as sensing mechanism for precursor availability, as phosphatidic acid becomes rapidly depleted upon phospholipid biosynthesis. This is Transcriptional repressor OPI1 (OPI1) from Saccharomyces cerevisiae (strain ATCC 204508 / S288c) (Baker's yeast).